We begin with the raw amino-acid sequence, 356 residues long: MYRVVRRLLFLTPPERIHTLVFAMLRCVTSIAVLRRLLRWVLGPTDPVLASTVFGVRFPGPLGLAAGFDKDGMGLLAWGALGFGYAEVGTVTAYPQPGNPAPRMFRLPADRALLNRMGFNNNGAGALAIQLAHHRPEVPIGVNISKTKATPASHTVDDYRASARLVGPLASYLVVNVSSPNTPGLRDLQAVESLRAILLGVLAETSVPVLVKIAPDISDSEIDDITDLAVELRLAGIVATNTTVSRDCLVTPGIDALGAGGISGPPVARRAVEVLRRLYGRVGDRLVLISVGGIETADDAWDRITAGASLLQGYTGFIYGGGFWPKHIHDGIARRLHDGGFASLRDAVGSATAKSE.

FMN is bound by residues Ala-66–Lys-70 and Thr-90. Lys-70 contributes to the substrate binding site. A substrate-binding site is contributed by Asn-115 to Phe-119. Positions 143 and 176 each coordinate FMN. Asn-176 provides a ligand contact to substrate. The active-site Nucleophile is Ser-179. Asn-181 is a substrate binding site. FMN contacts are provided by Lys-212 and Thr-240. Asn-241 to Thr-242 is a binding site for substrate. FMN contacts are provided by residues Gly-264, Gly-293, and Tyr-314–Thr-315.

This sequence belongs to the dihydroorotate dehydrogenase family. Type 2 subfamily. As to quaternary structure, monomer. The cofactor is FMN.

The protein resides in the cell membrane. It carries out the reaction (S)-dihydroorotate + a quinone = orotate + a quinol. The protein operates within pyrimidine metabolism; UMP biosynthesis via de novo pathway; orotate from (S)-dihydroorotate (quinone route): step 1/1. In terms of biological role, catalyzes the conversion of dihydroorotate to orotate with quinone as electron acceptor. This is Dihydroorotate dehydrogenase (quinone) (pyrD) from Mycobacterium leprae (strain TN).